The following is a 370-amino-acid chain: UDP-N-acetylglucosamine--N-acetylmuramyl-(pentapeptide) pyrophosphoryl-undecaprenol N-acetylglucosamine transferase (370 aa).

UDP-N-acetyl-alpha-D-glucosamine-binding positions include 15–17 (TGG), Asn129, Arg171, Ser200, Ile256, and Gln301.

This sequence belongs to the glycosyltransferase 28 family. MurG subfamily.

The protein localises to the cell membrane. It carries out the reaction di-trans,octa-cis-undecaprenyl diphospho-N-acetyl-alpha-D-muramoyl-L-alanyl-D-glutamyl-meso-2,6-diaminopimeloyl-D-alanyl-D-alanine + UDP-N-acetyl-alpha-D-glucosamine = di-trans,octa-cis-undecaprenyl diphospho-[N-acetyl-alpha-D-glucosaminyl-(1-&gt;4)]-N-acetyl-alpha-D-muramoyl-L-alanyl-D-glutamyl-meso-2,6-diaminopimeloyl-D-alanyl-D-alanine + UDP + H(+). It functions in the pathway cell wall biogenesis; peptidoglycan biosynthesis. Functionally, cell wall formation. Catalyzes the transfer of a GlcNAc subunit on undecaprenyl-pyrophosphoryl-MurNAc-pentapeptide (lipid intermediate I) to form undecaprenyl-pyrophosphoryl-MurNAc-(pentapeptide)GlcNAc (lipid intermediate II). In Caldicellulosiruptor saccharolyticus (strain ATCC 43494 / DSM 8903 / Tp8T 6331), this protein is UDP-N-acetylglucosamine--N-acetylmuramyl-(pentapeptide) pyrophosphoryl-undecaprenol N-acetylglucosamine transferase.